We begin with the raw amino-acid sequence, 175 residues long: Adenine phosphoribosyltransferase (175 aa).

It belongs to the purine/pyrimidine phosphoribosyltransferase family. As to quaternary structure, homodimer.

The protein localises to the cytoplasm. The enzyme catalyses AMP + diphosphate = 5-phospho-alpha-D-ribose 1-diphosphate + adenine. It participates in purine metabolism; AMP biosynthesis via salvage pathway; AMP from adenine: step 1/1. Catalyzes a salvage reaction resulting in the formation of AMP, that is energically less costly than de novo synthesis. The sequence is that of Adenine phosphoribosyltransferase from Synechococcus sp. (strain JA-3-3Ab) (Cyanobacteria bacterium Yellowstone A-Prime).